Here is a 343-residue protein sequence, read N- to C-terminus: Globoside alpha-1,3-N-acetylgalactosaminyltransferase 1 (343 aa).

Over 1–6 the chain is Cytoplasmic; it reads MISRKA. A helical; Signal-anchor for type II membrane protein membrane pass occupies residues 7–27; it reads LGSLVCLSAVATLIWIASGNW. The Lumenal segment spans residues 28–343; it reads KVHYLPYYLP…VDKNYQEVRN (316 aa). N-linked (GlcNAc...) asparagine glycosylation is present at Asn104. Residues 112–117, 202–204, and 224–227 contribute to the substrate site; these read FAVGKY, DID, and HPGY. Residues Asp202 and Asp204 each contribute to the Mn(2+) site. Glu294 acts as the Nucleophile in catalysis.

It belongs to the glycosyltransferase 6 family. The cofactor is Mn(2+).

The protein localises to the golgi apparatus membrane. The protein operates within protein modification; protein glycosylation. Functionally, may catalyze the formation of some glycolipid via the addition of N-acetylgalactosamine (GalNAc) in alpha-1,3-linkage to some substrate. Glycolipids probably serve for adherence of some pathogens. The polypeptide is Globoside alpha-1,3-N-acetylgalactosaminyltransferase 1 (Gallus gallus (Chicken)).